We begin with the raw amino-acid sequence, 633 residues long: Probable potassium transport system protein Kup (633 aa).

Transmembrane regions (helical) follow at residues 21–41, 61–81, 112–132, 149–169, 176–196, 217–237, 258–278, 290–310, 348–368, 377–397, 398–418, and 430–450; these read MLVA…LYTL, ILSL…MMFV, LLVV…MITP, GIDH…FLIQ, IGIL…ALGV, FFMV…LALT, WFLL…ALLL, LLAP…ATVI, IYIG…VIGF, AYGV…SAVM, LLLW…FLLV, and IVQG…LMTT.

This sequence belongs to the HAK/KUP transporter (TC 2.A.72) family.

It localises to the cell inner membrane. The catalysed reaction is K(+)(in) + H(+)(in) = K(+)(out) + H(+)(out). Functionally, transport of potassium into the cell. Likely operates as a K(+):H(+) symporter. The sequence is that of Probable potassium transport system protein Kup from Pseudomonas fluorescens (strain Pf0-1).